Reading from the N-terminus, the 355-residue chain is Phosphoribosylformylglycinamidine cyclo-ligase (355 aa).

Belongs to the AIR synthase family.

It localises to the cytoplasm. The enzyme catalyses 2-formamido-N(1)-(5-O-phospho-beta-D-ribosyl)acetamidine + ATP = 5-amino-1-(5-phospho-beta-D-ribosyl)imidazole + ADP + phosphate + H(+). It participates in purine metabolism; IMP biosynthesis via de novo pathway; 5-amino-1-(5-phospho-D-ribosyl)imidazole from N(2)-formyl-N(1)-(5-phospho-D-ribosyl)glycinamide: step 2/2. The chain is Phosphoribosylformylglycinamidine cyclo-ligase from Hamiltonella defensa subsp. Acyrthosiphon pisum (strain 5AT).